Consider the following 430-residue polypeptide: Elongation factor 1-alpha (430 aa).

A tr-type G domain is found at 7-219; sequence KPHVNIVFIG…DQIPEPEKPV (213 aa). The interval 16–23 is G1; the sequence is GHVDHGKS. 16–23 serves as a coordination point for GTP; the sequence is GHVDHGKS. Residue serine 23 coordinates Mg(2+). Positions 70 to 74 are G2; the sequence is GITID. The segment at 91–94 is G3; that stretch reads DAPG. GTP-binding positions include 91–95 and 146–149; these read DAPGH and NKMD. The segment at 146-149 is G4; sequence NKMD. Residues 183–185 form a G5 region; it reads SAW.

Belongs to the TRAFAC class translation factor GTPase superfamily. Classic translation factor GTPase family. EF-Tu/EF-1A subfamily.

It is found in the cytoplasm. It carries out the reaction GTP + H2O = GDP + phosphate + H(+). Functionally, GTP hydrolase that promotes the GTP-dependent binding of aminoacyl-tRNA to the A-site of ribosomes during protein biosynthesis. This is Elongation factor 1-alpha from Pyrococcus woesei.